The sequence spans 340 residues: MGNVMASTADAESSRGRGHLSAGLRLPEAPQYSGGVPPQMVEALKAEAKKPELTNPGTLEELHSRCRDIQANTFEGAKIMVNKGLSNHFQVTHTINMNSAGPSGYRFGATYVGTKQYGPTEAFPVLLGEIDPMGNLNANVIHQLTSRLRCKFASQFQDSKLVGTQLTGDYRGRDYTLTLTMGNPGFFTSSGVFVCQYLQSVTKRLALGSEFAYHYGPNVPGRQVAVLSAVGRYAFGDTVWSCTLGPAGFHLSYYQKASDQLQIGVEVETNIRQQESTATVAYQIDLPKADLVFRGSLDSNWLISGVLEKRLQPLPFSLAISGRMNHQKNSFRLGCGLMIG.

The tract at residues 1–37 is disordered; it reads MGNVMASTADAESSRGRGHLSAGLRLPEAPQYSGGVP.

This sequence belongs to the Tom40 family. Forms part of the preprotein translocase of the outer mitochondrial membrane (TOM complex). Interacts with mitochondrial targeting sequences. In terms of tissue distribution, only expressed in the male germline, detected in primary spermatocytes as well as post-meiotic stages. Not detected in stem cells and spermatogonia near the tip of the testis.

It is found in the mitochondrion outer membrane. In terms of biological role, channel-forming protein essential for import of protein precursors into mitochondria. This Drosophila melanogaster (Fruit fly) protein is Mitochondrial import receptor subunit TOM40 homolog 2.